The primary structure comprises 156 residues: MIEVAKLYSIEFMSKEGKSVNTLDKNCSLIIPLAENPDFLIKDIKERKYPENIILIIKHTEDILQNTDSPFSSSEALTIKGYKRAHEYGLFDMFEDDKVKLASQPSKSKTFIIEDIKDINAFVRMVWAHFDVGLRWRMSEEERKIIETNRKFGFYR.

This is an uncharacterized protein from Enterobacteria phage T4 (Bacteriophage T4).